We begin with the raw amino-acid sequence, 359 residues long: Endoglucanase (359 aa).

The first 23 residues, 1–23 (MPLRALVAVIVTTAVMLVPRAWA), serve as a signal peptide directing secretion. The Proton donor role is filled by glutamate 53. Catalysis depends on aspartate 110, which acts as the Nucleophile.

This sequence belongs to the glycosyl hydrolase 8 (cellulase D) family.

The enzyme catalyses Endohydrolysis of (1-&gt;4)-beta-D-glucosidic linkages in cellulose, lichenin and cereal beta-D-glucans.. In terms of biological role, the biological conversion of cellulose to glucose generally requires three types of hydrolytic enzymes: (1) Endoglucanases which cut internal beta-1,4-glucosidic bonds; (2) Exocellobiohydrolases that cut the disaccharide cellobiose from the non-reducing end of the cellulose polymer chain; (3) Beta-1,4-glucosidases which hydrolyze the cellobiose and other short cello-oligosaccharides to glucose. The chain is Endoglucanase from Cellulomonas uda.